A 366-amino-acid polypeptide reads, in one-letter code: MTDAPLILLAAGGTGGHLFPAEALGVVLIRRGYRVRLVTDHRATRYSGLFTAEMTDVVPSETVRGRTPWALAKTALKLGSGALLAFNLIGRLKPAAVVGFGGYPTLPPLLAATWRRVPTLIHEQNAVMGRANRFLAPRVDAIATGFPGHEIAWPVLASKITNTGNPIRPAVADAATVAYDPPAAGGSLRVLVFGGSQGARVMADIVPPALEKLDPALLRRLVLTQQVRDEDMGRVRAVYDRLQLNCELAPFFTDLPQRLASSQLVVSRSGAGTVAELAAIGRPGILVPLPGALDQDQFANAGVLTAAGGALRIVQPDFTPDRLAAEITALAADPAKLTQMAAAARQIGRLDAAERLADVVGRVAKV.

Residues 14-16, Asn-125, Arg-168, Ser-196, and Gln-297 each bind UDP-N-acetyl-alpha-D-glucosamine; that span reads TGG.

This sequence belongs to the glycosyltransferase 28 family. MurG subfamily.

The protein resides in the cell inner membrane. The enzyme catalyses di-trans,octa-cis-undecaprenyl diphospho-N-acetyl-alpha-D-muramoyl-L-alanyl-D-glutamyl-meso-2,6-diaminopimeloyl-D-alanyl-D-alanine + UDP-N-acetyl-alpha-D-glucosamine = di-trans,octa-cis-undecaprenyl diphospho-[N-acetyl-alpha-D-glucosaminyl-(1-&gt;4)]-N-acetyl-alpha-D-muramoyl-L-alanyl-D-glutamyl-meso-2,6-diaminopimeloyl-D-alanyl-D-alanine + UDP + H(+). It functions in the pathway cell wall biogenesis; peptidoglycan biosynthesis. Functionally, cell wall formation. Catalyzes the transfer of a GlcNAc subunit on undecaprenyl-pyrophosphoryl-MurNAc-pentapeptide (lipid intermediate I) to form undecaprenyl-pyrophosphoryl-MurNAc-(pentapeptide)GlcNAc (lipid intermediate II). The polypeptide is UDP-N-acetylglucosamine--N-acetylmuramyl-(pentapeptide) pyrophosphoryl-undecaprenol N-acetylglucosamine transferase (Rhodopseudomonas palustris (strain ATCC BAA-98 / CGA009)).